Reading from the N-terminus, the 313-residue chain is Hydroxyphenylpyruvate reductase (313 aa).

NADP(+) is bound by residues 152–155, 174–176, and I230; these read LGRI and SRS. R232 is an active-site residue. D256 lines the NADP(+) pocket. The active site involves E261. The active-site Proton donor is H279.

This sequence belongs to the D-isomer specific 2-hydroxyacid dehydrogenase family.

The enzyme catalyses (2R)-2-hydroxy-3-(4-hydroxyphenyl)propanoate + NAD(+) = 3-(4-hydroxyphenyl)pyruvate + NADH + H(+). It carries out the reaction (2R)-2-hydroxy-3-(4-hydroxyphenyl)propanoate + NADP(+) = 3-(4-hydroxyphenyl)pyruvate + NADPH + H(+). The catalysed reaction is (2R)-3-(3,4-dihydroxyphenyl)lactate + NADP(+) = 3-(3,4-dihydroxyphenyl)pyruvate + NADPH + H(+). It catalyses the reaction (2R)-3-(3,4-dihydroxyphenyl)lactate + NAD(+) = 3-(3,4-dihydroxyphenyl)pyruvate + NADH + H(+). In terms of biological role, catalyzes the NAD(P)H-dependent reduction of 4-hydroxyphenylpyruvate to 4-hydroxyphenyllactate and 3,4-dihydroxyphenylpyruvate to 3,4-dihydroxyphenyllactate in the biosynthesis of rosmarinic acid. Rosmarinic acid is an ester of caffeic acid and 3,4-dihydroxyphenyllactic acid. NADP is the preferred substrate. This is Hydroxyphenylpyruvate reductase (HPPR) from Plectranthus scutellarioides (Coleus).